Reading from the N-terminus, the 387-residue chain is Na(+)/H(+) antiporter NhaA (387 aa).

The next 12 helical transmembrane spans lie at 16–36 (AGGV…NSSI), 53–73 (IEHY…GLEL), 89–109 (LLPI…HMFF), 118–138 (GSGI…SLLG), 147–167 (VFLT…IAIF), 171–191 (GIDV…FILN), 197–217 (ILWP…HSGV), 220–240 (TITG…PDSI), 251–271 (PVAF…IIDS), 283–303 (IGIF…FCAI), 321–341 (VIGV…ITLL), and 354–374 (IAIM…LKMT).

This sequence belongs to the NhaA Na(+)/H(+) (TC 2.A.33) antiporter family.

Its subcellular location is the cell inner membrane. The catalysed reaction is Na(+)(in) + 2 H(+)(out) = Na(+)(out) + 2 H(+)(in). Functionally, na(+)/H(+) antiporter that extrudes sodium in exchange for external protons. In Cytophaga hutchinsonii (strain ATCC 33406 / DSM 1761 / CIP 103989 / NBRC 15051 / NCIMB 9469 / D465), this protein is Na(+)/H(+) antiporter NhaA.